A 1035-amino-acid polypeptide reads, in one-letter code: MFFNPYLSGARKPPNLVAKRSVAKTFLEIVPRGAMHDGQSGLIKHKTGRGAIMFYRDIKHVLENDMAWPCPLPAPPPSIEAFARRLMGPLKFHTYDQVDGVLTHDTQECLSPRYRHHITPSGNVLRFFGATEQGHSICVNVFGQRSYFYCEYADGDLLRDLLASVSDLVSEPRMAYALTITPVQKMSIYGYGTSPIPNLFRVSISNWSMAKKIGEYLLENGIPVYEIRVDPLTRLVIDKKMTTFGWCCVHRYEWRTHKSSTCDFEIDCDVADIMAVSDDTSWPVYRCLSFDIECMSASGGFPAAEQTDDIVIQISCVCYNTGGTGCEENTVFGTSGLHLFTIGSCAPLAGVDVYEFPSEYEMLLGFLIFFQRYSPCFVTGYNINSFDFKYILTRLEFVYKLSPGPYSKLPAQGRFSMYSPLKKFVTTTTTKVFISGTVVIDMYPVCMAKTSSPNYKLNTMAELYLKQQKEDMSYKDIPVKFISGCEGRAQVGKYCVQDAVLVKDLFNTINFHYEAGAIARLARIPMRRVIFDGQQIRIYTSLLDECACRDFIMPNHKGADNSSEPTDVSYQGATVFEPEVGYYSDPVVVFDFASLYPSIIMAHNLCYSTFVAPGGESPPESDVLTVELESGLSYRFVKNTVRNSVLSELLTKWVSQRRAVRETMRSCHDPVKRMLLDKEQLALKVTCNAFYGFTGVVNGMMPCLPIAASITRIGRDMLMRTSQFVEENFAEPCFLHNFFNREDYSGDPVAVKVIYGDTDSVFVCYRGVTAAALIERGPSLAHYITQCLFVDPIKLEFEKVFGSLMMICKKRYIGKIVGETELSMKGVDLVRKTSCEFVKNVTRDIIQLLFDDPEVSRAAVQLSRLTLDELKMQGVPPGFGRVIQRLSQARDELYTSRARVEELVLSSVLSKDVSLYKQSNLPHIAVIKRLAARSEELPVVGDRVFYVLTAPVDGRSSGVRNYEIAEDPTYVREHGVPIHADKYFDQVIKSVTNVLSPVFPPQTLRKDKFLLGILPHRIYLEPSFLPYCVKASEHC.

It belongs to the DNA polymerase type-B family.

The protein localises to the host nucleus. It catalyses the reaction DNA(n) + a 2'-deoxyribonucleoside 5'-triphosphate = DNA(n+1) + diphosphate. The chain is DNA polymerase catalytic subunit (UL54) from Macaca mulatta (Rhesus macaque).